The sequence spans 420 residues: ATP-dependent Clp protease ATP-binding subunit ClpX (420 aa).

The ClpX-type ZB domain occupies 3-57 (KKTPGTNGKQKLFCSFCGKEQDAVKRLVAGPGVYICDECISLCNEIIAEDHEHSH). C16, C19, C38, and C41 together coordinate Zn(2+). 122-129 (PTGSGKTL) contacts ATP.

This sequence belongs to the ClpX chaperone family. Component of the ClpX-ClpP complex. Forms a hexameric ring that, in the presence of ATP, binds to fourteen ClpP subunits assembled into a disk-like structure with a central cavity, resembling the structure of eukaryotic proteasomes.

Functionally, ATP-dependent specificity component of the Clp protease. It directs the protease to specific substrates. Can perform chaperone functions in the absence of ClpP. The chain is ATP-dependent Clp protease ATP-binding subunit ClpX from Leptospira borgpetersenii serovar Hardjo-bovis (strain L550).